The sequence spans 423 residues: F-box/LRR-repeat protein 2 (423 aa).

Residues Gly9–Ile55 enclose the F-box domain. LRR repeat units lie at residues Gln61–Gly87, Cys88–Gly113, Cys114–Ser139, Cys140–Trp165, Cys166–Gly191, Cys192–Ser217, Cys218–Gly243, Cys244–Arg269, Cys270–Glu295, Cys296–His321, Cys322–Asn350, Cys351–Asp375, and Cys376–Ala401. Residues Leu80–Gly90 are interaction with Calmodulin. Lys201 participates in a covalent cross-link: Glycyl lysine isopeptide (Lys-Gly) (interchain with G-Cter in ubiquitin). Thr404 is subject to Phosphothreonine. Cys420 carries the S-geranylgeranyl cysteine lipid modification. The CAAX motif signature appears at Cys420–Leu423.

As to quaternary structure, part of the SCF (SKP1-CUL1-F-box) E3 ubiquitin-protein ligase complex SCF(FBXL2) composed of CUL1, SKP1, RBX1 and FBXL2. Interacts with calmodulin; may antagonize substrate ubiquitination by SCF(FBXL2). May interact with PIK3R1. Interacts with PTPN13. Phosphorylated by GSK-beta (GSK3B), promoting recognition by FBXO3, leading to its ubiquitination by the SCF(FBXO3) complex. In terms of processing, ubiquitinated at Lys-201 by the SCF(FBXO3) complex in response to lipopolysaccharide (LPS), leading to its degradation by the proteasome.

Its subcellular location is the membrane. The protein operates within protein modification; protein ubiquitination. Its function is as follows. Calcium-activated substrate recognition component of the SCF (SKP1-cullin-F-box protein) E3 ubiquitin-protein ligase complex, SCF(FBXL2), which mediates the ubiquitination and subsequent proteasomal degradation of target proteins. Unlike many F-box proteins, FBXL2 does not seem to target phosphodegron within its substrates but rather calmodulin-binding motifs and is thereby antagonized by calmodulin. This is the case for the cyclins CCND2 and CCND3 which polyubiquitination and subsequent degradation are inhibited by calmodulin. Through CCND2 and CCND3 degradation induces cell-cycle arrest in G(0). SCF(FBXL2) also mediates PIK3R2 ubiquitination and proteasomal degradation thereby regulating phosphatidylinositol 3-kinase signaling and autophagy. PCYT1A monoubiquitination by SCF(FBXL2) and subsequent degradation regulates synthesis of phosphatidylcholine, which is utilized for formation of membranes and of pulmonary surfactant. The SCF(FBXL2) complex acts as a regulator of inflammation by mediating ubiquitination and degradation of TRAF proteins (TRAF1, TRAF2, TRAF3, TRAF4, TRAF5 and TRAF6). The SCF(FBXL2) complex acts as a negative regulator of the NLRP3 inflammasome by mediating ubiquitination and degradation of NLRP3. The protein is F-box/LRR-repeat protein 2 of Bos taurus (Bovine).